The sequence spans 675 residues: UvrABC system protein B (675 aa).

The 386-residue stretch at 32–417 (EGLSDGLAYQ…EHAGQVVEQV (386 aa)) folds into the Helicase ATP-binding domain. An ATP-binding site is contributed by 45–52 (GVTGSGKT). The short motif at 98–121 (YYDYYQPEAYVPSRDLFIEKDSAI) is the Beta-hairpin element. Residues 436–602 (QVDDLMSEIN…QIKKQVKDII (167 aa)) enclose the Helicase C-terminal domain. Residues 634–669 (IKEIAKLEKAMQQAARDLQFEEAAVLRDRIRDIKEN) form the UVR domain.

Belongs to the UvrB family. In terms of assembly, forms a heterotetramer with UvrA during the search for lesions. Interacts with UvrC in an incision complex.

The protein localises to the cytoplasm. In terms of biological role, the UvrABC repair system catalyzes the recognition and processing of DNA lesions. A damage recognition complex composed of 2 UvrA and 2 UvrB subunits scans DNA for abnormalities. Upon binding of the UvrA(2)B(2) complex to a putative damaged site, the DNA wraps around one UvrB monomer. DNA wrap is dependent on ATP binding by UvrB and probably causes local melting of the DNA helix, facilitating insertion of UvrB beta-hairpin between the DNA strands. Then UvrB probes one DNA strand for the presence of a lesion. If a lesion is found the UvrA subunits dissociate and the UvrB-DNA preincision complex is formed. This complex is subsequently bound by UvrC and the second UvrB is released. If no lesion is found, the DNA wraps around the other UvrB subunit that will check the other stand for damage. The polypeptide is UvrABC system protein B (Neisseria meningitidis serogroup B (strain ATCC BAA-335 / MC58)).